We begin with the raw amino-acid sequence, 220 residues long: Deoxyribose-phosphate aldolase (220 aa).

Residue Asp-89 is the Proton donor/acceptor of the active site. The active-site Schiff-base intermediate with acetaldehyde is the Lys-151. Lys-180 serves as the catalytic Proton donor/acceptor.

Belongs to the DeoC/FbaB aldolase family. DeoC type 1 subfamily.

Its subcellular location is the cytoplasm. It catalyses the reaction 2-deoxy-D-ribose 5-phosphate = D-glyceraldehyde 3-phosphate + acetaldehyde. It functions in the pathway carbohydrate degradation; 2-deoxy-D-ribose 1-phosphate degradation; D-glyceraldehyde 3-phosphate and acetaldehyde from 2-deoxy-alpha-D-ribose 1-phosphate: step 2/2. Catalyzes a reversible aldol reaction between acetaldehyde and D-glyceraldehyde 3-phosphate to generate 2-deoxy-D-ribose 5-phosphate. This chain is Deoxyribose-phosphate aldolase, found in Bdellovibrio bacteriovorus (strain ATCC 15356 / DSM 50701 / NCIMB 9529 / HD100).